A 179-amino-acid chain; its full sequence is Dual-action ribosomal maturation protein DarP (179 aa).

This sequence belongs to the DarP family.

Its subcellular location is the cytoplasm. Member of a network of 50S ribosomal subunit biogenesis factors which assembles along the 30S-50S interface, preventing incorrect 23S rRNA structures from forming. Promotes peptidyl transferase center (PTC) maturation. This is Dual-action ribosomal maturation protein DarP from Aliivibrio fischeri (strain ATCC 700601 / ES114) (Vibrio fischeri).